The following is a 306-amino-acid chain: uncharacterized protein (306 aa).

This is an uncharacterized protein from Escherichia coli (strain K12).